We begin with the raw amino-acid sequence, 579 residues long: MIVSPHKASRIPGNRLRKALMASAALVGLMSAGQLWAFNLDDVAAKAKDLAGQKYEAPKSNLPAVFRDMKFADYQKIRFLQEKAEWAKDKTPFKLSFYHQGMHFDTPVKINEVTATTVEEIKYDPSRFEFGDVPHDPETTKNLGYAGFRVLYPINKADKQDEIMTLLGASYFRVVGKGHVYGLSARGLAIDTALPSGEEFPRFTEFWVEKPKPADKHLVIYALLDSPRSTGAYKLILRPGNDTVVDVQSRVFLRDHVSRLGIAPLTSMYLFGPNQPSKVMNYRPALHDSEGLSIHAGNGEWLWRPLNNPKHLSVSNFSVENPRGFGLMQRHRDFKDYEDLDDNYQKRPSAWIEPKGDWGKGTVDLVEIPTADETNDNIVAFWSPETLPEPGKPFEYDYRMHWTIDESRFQAQELGSVTQTMRSTGDVKQSNLIRQPDGSVAFLVDFAGPALAALPEDAAVRSQISVGDNAEVVENNLRYNPETKGWRLTLRMKIKEANKATEMRAALVRDVPVEAAKPAEEAKHDKTAAKHGKAEKAAKAEQSANAEQPAADAASTNGTPATTEKVLTETWSYQLPADE.

The N-terminal stretch at 1-37 is a signal peptide; sequence MIVSPHKASRIPGNRLRKALMASAALVGLMSAGQLWA. Residues 516–579 form a disordered region; the sequence is AKPAEEAKHD…TWSYQLPADE (64 aa). Residues 517-539 are compositionally biased toward basic and acidic residues; the sequence is KPAEEAKHDKTAAKHGKAEKAAK.

The protein belongs to the OpgD/OpgG family.

It is found in the periplasm. It participates in glycan metabolism; osmoregulated periplasmic glucan (OPG) biosynthesis. Its function is as follows. Involved in the biosynthesis of osmoregulated periplasmic glucans (OPGs). The polypeptide is Glucans biosynthesis protein G (Pseudomonas putida (strain W619)).